Here is a 146-residue protein sequence, read N- to C-terminus: Ataxin-7-like protein 1 (146 aa).

2 disordered regions span residues 1–27 and 125–146; these read MTSERSRIPCLSAAAAEGTGKKQQEGT and KRNASISWSGAESRQALEQRQV. Over residues 127–138 the composition is skewed to polar residues; the sequence is NASISWSGAESR.

The protein is Ataxin-7-like protein 1 (Atxn7l1) of Mus musculus (Mouse).